We begin with the raw amino-acid sequence, 931 residues long: Semaphorin-6C (931 aa).

A signal peptide spans methionine 1–alanine 25. Residues alanine 26–proline 605 lie on the Extracellular side of the membrane. Positions proline 31 to leucine 517 constitute a Sema domain. Asparagine 71 carries N-linked (GlcNAc...) asparagine glycosylation. 4 disulfide bridges follow: cysteine 112–cysteine 122, cysteine 140–cysteine 149, cysteine 263–cysteine 374, and cysteine 288–cysteine 333. A glycan (N-linked (GlcNAc...) asparagine) is linked at asparagine 287. An N-linked (GlcNAc...) asparagine glycan is attached at asparagine 438. 4 disulfide bridges follow: cysteine 480/cysteine 511, cysteine 520/cysteine 538, cysteine 526/cysteine 571, and cysteine 530/cysteine 546. The tract at residues aspartate 556 to arginine 591 is disordered. A helical transmembrane segment spans residues leucine 606 to valine 626. The Cytoplasmic segment spans residues serine 627–phenylalanine 931. 2 disordered regions span residues leucine 655–alanine 747 and histidine 777–phenylalanine 931. The span at proline 693–leucine 708 shows a compositional bias: low complexity. Residues proline 893–valine 906 are compositionally biased toward basic and acidic residues. Positions serine 911–alanine 923 are enriched in pro residues.

This sequence belongs to the semaphorin family.

Its subcellular location is the cell membrane. In terms of biological role, may be a stop signal for the dorsal root ganglion neurons in their target areas, and possibly also for other neurons. May also be involved in the maintenance and remodeling of neuronal connections. The polypeptide is Semaphorin-6C (Sema6c) (Mus musculus (Mouse)).